Consider the following 622-residue polypeptide: uncharacterized protein (622 aa).

Over residues 157–166 (LKESPLRDQQ) the composition is skewed to basic and acidic residues. A disordered region spans residues 157–238 (LKESPLRDQQ…GLPDHNSISE (82 aa)).

This is an uncharacterized protein from Homo sapiens (Human).